Reading from the N-terminus, the 476-residue chain is Phosphomethylpyrimidine synthase (476 aa).

The tract at residues 1 to 27 (MSTQLQHARDGTVTDAMRRVADREGRD) is disordered. Residues 7 to 27 (HARDGTVTDAMRRVADREGRD) show a composition bias toward basic and acidic residues. Substrate contacts are provided by residues N67, M96, Y125, H160, 180 to 182 (SRG), 221 to 224 (DGLR), and E260. H264 contacts Zn(2+). Y287 is a binding site for substrate. H328 provides a ligand contact to Zn(2+). [4Fe-4S] cluster-binding residues include C408, C411, and C416. The interval 425-476 (RDAGDDADDMTELTTETDLSESAAAEVNRPPTGTHDAPAAEQAPSPGDDDDD) is disordered. The span at 436–447 (ELTTETDLSESA) shows a compositional bias: low complexity.

This sequence belongs to the ThiC family. Requires [4Fe-4S] cluster as cofactor.

It carries out the reaction 5-amino-1-(5-phospho-beta-D-ribosyl)imidazole + S-adenosyl-L-methionine = 4-amino-2-methyl-5-(phosphooxymethyl)pyrimidine + CO + 5'-deoxyadenosine + formate + L-methionine + 3 H(+). Its pathway is cofactor biosynthesis; thiamine diphosphate biosynthesis. Functionally, catalyzes the synthesis of the hydroxymethylpyrimidine phosphate (HMP-P) moiety of thiamine from aminoimidazole ribotide (AIR) in a radical S-adenosyl-L-methionine (SAM)-dependent reaction. The protein is Phosphomethylpyrimidine synthase of Halobacterium salinarum (strain ATCC 29341 / DSM 671 / R1).